A 777-amino-acid polypeptide reads, in one-letter code: Dynamin-like protein ARC5 (777 aa).

In terms of domain architecture, Dynamin-type G spans proline 45–proline 343. The interval glycine 55–serine 62 is G1 motif. GTP is bound at residue glycine 55–serine 62. The tract at residues lysine 81–arginine 83 is G2 motif. Residues aspartate 160 to glycine 163 are G3 motif. GTP contacts are provided by residues aspartate 160–leucine 164 and threonine 231–aspartate 234. The G4 motif stretch occupies residues threonine 231–aspartate 234. The tract at residues serine 265–phenylalanine 268 is G5 motif. 2 coiled-coil regions span residues glutamate 300 to arginine 320 and asparagine 728 to glutamate 765.

Belongs to the TRAFAC class dynamin-like GTPase superfamily. Dynamin/Fzo/YdjA family. Forms a homodimer and heterodimers with DRP3A and DRP3B on peroxisomes. Also interacts with FIS1A (but not FIS1B) and PEX11 proteins (PEX11A, PEX11B, PEX11C, PEX11D and PEX11E) on peroxisomes. Interacts with PDV1 and PDV2. Post-translationally, stabilized at the plastid outer envelope membranes (OEMs) in the constriction site when in complex with GTP, but destabilized after conversion of GTP into GDP leading to turnover with a cytosolic pool.

The protein resides in the cytoplasm. Its subcellular location is the plastid. It is found in the chloroplast outer membrane. The protein localises to the peroxisome. It localises to the cytosol. It catalyses the reaction GTP + H2O = GDP + phosphate + H(+). Its activity is regulated as follows. GTPase activity is repressed by PDV2 thus increasing stability at the plastid outer envelope membranes (OEMs) periphery. Functionally, mechanochemical GTPase component of both plastid and peroxisome division machinery. Required for the last steps of plastid division specifically in mesophyll-cell, when the narrow isthmus breaks, facilitating the separation of the daughter plastids. Necessary for peroxisome activities. Seems to influence stromule (stroma-filled tubular extensions of the plastid envelope membrane) length and frequency. The polypeptide is Dynamin-like protein ARC5 (Arabidopsis thaliana (Mouse-ear cress)).